The following is a 125-amino-acid chain: uncharacterized protein (125 aa).

The disordered stretch occupies residues 1-21; sequence MLFYHCSSFSSSSSSSSSSAS. A compositionally biased stretch (low complexity) spans 7–21; that stretch reads SSFSSSSSSSSSSAS.

This is an uncharacterized protein from Saccharomyces cerevisiae (strain ATCC 204508 / S288c) (Baker's yeast).